A 541-amino-acid polypeptide reads, in one-letter code: Membrane protein insertase YidC (541 aa).

Helical transmembrane passes span 6–26 (NLLL…WESD), 326–346 (VVDY…LMFF), 349–369 (LVHN…GLLY), 420–440 (GGCL…WVLL), 457–477 (LSVQ…MWAM), and 500–520 (MIFT…WLVG).

This sequence belongs to the OXA1/ALB3/YidC family. Type 1 subfamily. As to quaternary structure, interacts with the Sec translocase complex via SecD. Specifically interacts with transmembrane segments of nascent integral membrane proteins during membrane integration.

Its subcellular location is the cell inner membrane. In terms of biological role, required for the insertion and/or proper folding and/or complex formation of integral membrane proteins into the membrane. Involved in integration of membrane proteins that insert both dependently and independently of the Sec translocase complex, as well as at least some lipoproteins. Aids folding of multispanning membrane proteins. In Shewanella amazonensis (strain ATCC BAA-1098 / SB2B), this protein is Membrane protein insertase YidC.